Consider the following 355-residue polypeptide: MKRDIQYLLNPALQNIATYRVEGGQQAEIKLNQNESPFDVPMWLKEEITGEFIKEPWNRYPDILPYRGMQVYADFLGISPDSVMMSNGSNEMLYTIFLACLGPGRKVLIPDPSFSLYEKIALLLQSQIVTVPMLPDLDFDLEAILRTAHDEAVDFIVISTPNNPTGKSLTFEEVRLIAQSSDAIVLVDEAYIEFSRQRSVLELIDELPNLVVLRTMSKAIALAGIRIGFALANPLLMAEIAKPKIPFASSRLAEITLSMVLANYSLVTDAVSYILHEREKLYTAMLTIDGVEPFVSDTNFLIIRVSDAGSVFQNLQSQGILVRNVSGYRLMENCLRFNVGLVDENQQLIAKLRQF.

Lysine 218 is modified (N6-(pyridoxal phosphate)lysine).

This sequence belongs to the class-II pyridoxal-phosphate-dependent aminotransferase family. Histidinol-phosphate aminotransferase subfamily. In terms of assembly, homodimer. Pyridoxal 5'-phosphate is required as a cofactor.

It carries out the reaction L-histidinol phosphate + 2-oxoglutarate = 3-(imidazol-4-yl)-2-oxopropyl phosphate + L-glutamate. Its pathway is amino-acid biosynthesis; L-histidine biosynthesis; L-histidine from 5-phospho-alpha-D-ribose 1-diphosphate: step 7/9. The chain is Histidinol-phosphate aminotransferase from Pelodictyon phaeoclathratiforme (strain DSM 5477 / BU-1).